We begin with the raw amino-acid sequence, 189 residues long: Peptidyl-tRNA hydrolase (189 aa).

Tyr15 serves as a coordination point for tRNA. His20 acts as the Proton acceptor in catalysis. Positions 65, 67, and 113 each coordinate tRNA.

Belongs to the PTH family. In terms of assembly, monomer.

The protein localises to the cytoplasm. It carries out the reaction an N-acyl-L-alpha-aminoacyl-tRNA + H2O = an N-acyl-L-amino acid + a tRNA + H(+). In terms of biological role, hydrolyzes ribosome-free peptidyl-tRNAs (with 1 or more amino acids incorporated), which drop off the ribosome during protein synthesis, or as a result of ribosome stalling. Its function is as follows. Catalyzes the release of premature peptidyl moieties from peptidyl-tRNA molecules trapped in stalled 50S ribosomal subunits, and thus maintains levels of free tRNAs and 50S ribosomes. This chain is Peptidyl-tRNA hydrolase, found in Caldicellulosiruptor bescii (strain ATCC BAA-1888 / DSM 6725 / KCTC 15123 / Z-1320) (Anaerocellum thermophilum).